The following is a 197-amino-acid chain: Putative peptidyl-prolyl cis-trans isomerase (197 aa).

One can recognise a PPIase cyclophilin-type domain in the interval N14 to V195.

The protein belongs to the cyclophilin-type PPIase family.

The enzyme catalyses [protein]-peptidylproline (omega=180) = [protein]-peptidylproline (omega=0). Functionally, PPIases accelerate the folding of proteins. It catalyzes the cis-trans isomerization of proline imidic peptide bonds in oligopeptides. The polypeptide is Putative peptidyl-prolyl cis-trans isomerase (Staphylococcus epidermidis (strain ATCC 35984 / DSM 28319 / BCRC 17069 / CCUG 31568 / BM 3577 / RP62A)).